Reading from the N-terminus, the 528-residue chain is GMP synthase [glutamine-hydrolyzing] (528 aa).

The 192-residue stretch at 13 to 204 (AIVILDFGSQ…VYHVCGCDPD (192 aa)) folds into the Glutamine amidotransferase type-1 domain. The active-site Nucleophile is the C90. Catalysis depends on residues H178 and E180. The 199-residue stretch at 205-403 (WTTAAFIDEA…LGLPEEIVRR (199 aa)) folds into the GMPS ATP-PPase domain. Residue 232-238 (SGGVDSS) coordinates ATP.

As to quaternary structure, homodimer.

The enzyme catalyses XMP + L-glutamine + ATP + H2O = GMP + L-glutamate + AMP + diphosphate + 2 H(+). It functions in the pathway purine metabolism; GMP biosynthesis; GMP from XMP (L-Gln route): step 1/1. Catalyzes the synthesis of GMP from XMP. The protein is GMP synthase [glutamine-hydrolyzing] of Synechococcus sp. (strain CC9605).